A 101-amino-acid polypeptide reads, in one-letter code: Small ribosomal subunit protein uS14 (101 aa).

It belongs to the universal ribosomal protein uS14 family. Part of the 30S ribosomal subunit. Contacts proteins S3 and S10.

Its function is as follows. Binds 16S rRNA, required for the assembly of 30S particles and may also be responsible for determining the conformation of the 16S rRNA at the A site. The protein is Small ribosomal subunit protein uS14 of Haemophilus influenzae (strain 86-028NP).